We begin with the raw amino-acid sequence, 1252 residues long: MLKCPERVSVKKKEDIPDLPNLIEIQIKSYKQFLQIGKLAEERENIGLEEVFREIFPIKSYNEATVLEYLSYNLGVPKYSPEECIRRGITYSVTLKVRFRLTDETGIKEEEVYMGTIPLMTDKGTFIINGAERVVVSQVHRSPGINFEQEKHSKGNILFSFRIIPYRGSWLEAIFDINDLIYIHIDRKKRRRKILAITFIRALGYSSDADIIEEFFTIGESSLRSEKDFALLVGRILADNIIDEASSLVYGKAGEKLSTAMLKRMLDAGIASVKIAVDADENHPIIKMLAKDPTDSYEAALKDFYRRLRPGEPATLANARSTIMRLFFDPKRYNLGRVGRYKLNRKLGFSIDDEALSQVTLRKEDVIGALKYLIRLKMGDEKACVDDIDHLANRRVRSVGELIQNQCRSGLARMEKIVRERMNLFDFSSDTLTPGKVVSAKGLASVLKDFFGRSQLSQFMDQTNPVAELTHKRRLSALGPGGLNRERAGFEVRDVHASHYGRICPIETPEGPNIGLITSLSSFAKINEFGFIETPYRIVRDGIVTDEIEYMTADVEEECVIAQASASLDEYNMFTEPVCWVRYAGEAFEADTSTVTHMDVSPKQLVSIVTGLIPFLEHDDANRALMGSNMQRQAVPLLKTEAPVVGTGLECRAAKDSGAIVVAEEDGVVDFVDGYKVVVAAKHNPTIKRTYHLKKFLRSNSGTCINQQPLCAVGDVITKGDVIADGPATDRGELALGKNVLVAFMPWYGYNFEDAIIISEKLIREDAYTSIYIEEFELTARDTKLGKEEITRDIPNVSDEVLANLGEDGIIRIGAEVKPGDILVGKITPKSETELAPEERLLRAIFGEKAADVKDASLTVPPGTEGVVMDVKVFSRKDRLSKSDDELVEEAVHLKDLQKGYKNQVATLKTEYREKLGALLLNEKAPAAIIHRRTAEIVVHEGLLFDQETIERIEQEDLVDLLMPNCEMYEVLKGLLSDYETALQRLEINYKTEVEHIREGDADLDHGVIRQVKVYVASKRKLQVGDKMAGRHGNKGVVSKIVPEADMPYLSNGETVQMILNPLGVPSRMNLGQVLETHLGYAAKTAGIYVKTPVFEGFPEQRIWDMMIEQGLPEDGKSFLYDGKTGERFDNKVVIGYIYMLKLSHLIADKIHARSIGPYSLVTQQPLGGKAQMGGQRFGEMEVWALEAYGVAHMLQEILTVKSDDVSGRTRIYESIVKGENLLRSGTPESFNVLIKEMQGLGLDVRPMVVDA.

This sequence belongs to the RNA polymerase beta chain family. In terms of assembly, the RNAP catalytic core consists of 2 alpha, 1 beta, 1 beta' and 1 omega subunit. When a sigma factor is associated with the core the holoenzyme is formed, which can initiate transcription.

The catalysed reaction is RNA(n) + a ribonucleoside 5'-triphosphate = RNA(n+1) + diphosphate. Functionally, DNA-dependent RNA polymerase catalyzes the transcription of DNA into RNA using the four ribonucleoside triphosphates as substrates. The polypeptide is DNA-directed RNA polymerase subunit beta (Chlamydia pneumoniae (Chlamydophila pneumoniae)).